The following is a 462-amino-acid chain: L-seryl-tRNA(Sec) selenium transferase (462 aa).

Lysine 295 carries the N6-(pyridoxal phosphate)lysine modification.

It belongs to the SelA family. In terms of assembly, homodecamer; pentamer of dimers. Binds only one seryl-tRNA(Sec) per dimer. Pyridoxal 5'-phosphate is required as a cofactor.

It is found in the cytoplasm. It carries out the reaction L-seryl-tRNA(Sec) + selenophosphate + H(+) = L-selenocysteinyl-tRNA(Sec) + phosphate. The protein operates within aminoacyl-tRNA biosynthesis; selenocysteinyl-tRNA(Sec) biosynthesis; selenocysteinyl-tRNA(Sec) from L-seryl-tRNA(Sec) (bacterial route): step 1/1. In terms of biological role, converts seryl-tRNA(Sec) to selenocysteinyl-tRNA(Sec) required for selenoprotein biosynthesis. The protein is L-seryl-tRNA(Sec) selenium transferase of Klebsiella pneumoniae (strain 342).